The sequence spans 447 residues: Tubulin beta chain (447 aa).

GTP contacts are provided by Q11, E69, S138, G142, T143, G144, N204, and N226. E69 lines the Mg(2+) pocket. The disordered stretch occupies residues 424–447; it reads QYQDASISEGEEDYEEEPQVENEE. Residues 432–447 show a composition bias toward acidic residues; that stretch reads EGEEDYEEEPQVENEE.

Belongs to the tubulin family. Dimer of alpha and beta chains. A typical microtubule is a hollow water-filled tube with an outer diameter of 25 nm and an inner diameter of 15 nM. Alpha-beta heterodimers associate head-to-tail to form protofilaments running lengthwise along the microtubule wall with the beta-tubulin subunit facing the microtubule plus end conferring a structural polarity. Microtubules usually have 13 protofilaments but different protofilament numbers can be found in some organisms and specialized cells. Mg(2+) serves as cofactor.

Its subcellular location is the cytoplasm. It is found in the cytoskeleton. Tubulin is the major constituent of microtubules, a cylinder consisting of laterally associated linear protofilaments composed of alpha- and beta-tubulin heterodimers. Microtubules grow by the addition of GTP-tubulin dimers to the microtubule end, where a stabilizing cap forms. Below the cap, tubulin dimers are in GDP-bound state, owing to GTPase activity of alpha-tubulin. The chain is Tubulin beta chain from Uncinula necator (Grape powdery mildew).